The sequence spans 126 residues: Histone H2B.5 (126 aa).

A compositionally biased stretch (basic and acidic residues) spans 1–27 (MAPKAEKKPSEKAPKADKKITKEGGSE). The segment at 1–34 (MAPKAEKKPSEKAPKADKKITKEGGSERKKKTKK) is disordered. Ala2 is modified (n,N,N-trimethylalanine; alternate). N,N-dimethylalanine; alternate is present on Ala2. N-methylalanine; alternate is present on Ala2. An N6-methyllysine modification is found at Lys4. An N6-acetyllysine mark is found at Lys7, Lys12, Lys18, and Lys19. Lys122 is covalently cross-linked (Glycyl lysine isopeptide (Lys-Gly) (interchain with G-Cter in ubiquitin)).

The protein belongs to the histone H2B family. The nucleosome is a histone octamer containing two molecules each of H2A, H2B, H3 and H4 assembled in one H3-H4 heterotetramer and two H2A-H2B heterodimers. The octamer wraps approximately 147 bp of DNA. Post-translationally, can be acetylated to form H2BK6ac, H2BK33ac and H2BK34ac. In terms of processing, monoubiquitinated by BRE1 to form H2BK143ub1 and deubiquitinated by UBP26. Required for heterochromatic histone H3 di- and trimethylation at H3K4me. May give a specific tag for epigenetic transcriptional activation.

It localises to the nucleus. The protein localises to the chromosome. Its function is as follows. Core component of nucleosome. Nucleosomes wrap and compact DNA into chromatin, limiting DNA accessibility to the cellular machineries which require DNA as a template. Histones thereby play a central role in transcription regulation, DNA repair, DNA replication and chromosomal stability. DNA accessibility is regulated via a complex set of post-translational modifications of histones, also called histone code, and nucleosome remodeling. The chain is Histone H2B.5 from Arabidopsis thaliana (Mouse-ear cress).